A 177-amino-acid polypeptide reads, in one-letter code: NAD(P)H-quinone oxidoreductase subunit 6, chloroplastic (177 aa).

5 consecutive transmembrane segments (helical) span residues phenylalanine 10–threonine 30, proline 32–proline 52, alanine 61–methionine 81, leucine 92–isoleucine 112, and phenylalanine 152–serine 172.

This sequence belongs to the complex I subunit 6 family. NDH is composed of at least 16 different subunits, 5 of which are encoded in the nucleus.

The protein resides in the plastid. It is found in the chloroplast thylakoid membrane. It carries out the reaction a plastoquinone + NADH + (n+1) H(+)(in) = a plastoquinol + NAD(+) + n H(+)(out). The enzyme catalyses a plastoquinone + NADPH + (n+1) H(+)(in) = a plastoquinol + NADP(+) + n H(+)(out). NDH shuttles electrons from NAD(P)H:plastoquinone, via FMN and iron-sulfur (Fe-S) centers, to quinones in the photosynthetic chain and possibly in a chloroplast respiratory chain. The immediate electron acceptor for the enzyme in this species is believed to be plastoquinone. Couples the redox reaction to proton translocation, and thus conserves the redox energy in a proton gradient. In Ranunculus macranthus (Large buttercup), this protein is NAD(P)H-quinone oxidoreductase subunit 6, chloroplastic (ndhG).